A 434-amino-acid chain; its full sequence is D-amino acid dehydrogenase (434 aa).

An FAD-binding site is contributed by 3–17 (VVILGSGVVGVTSAW).

This sequence belongs to the DadA oxidoreductase family. FAD serves as cofactor.

The catalysed reaction is a D-alpha-amino acid + A + H2O = a 2-oxocarboxylate + AH2 + NH4(+). It functions in the pathway amino-acid degradation; D-alanine degradation; NH(3) and pyruvate from D-alanine: step 1/1. Oxidative deamination of D-amino acids. In Yersinia pseudotuberculosis serotype O:3 (strain YPIII), this protein is D-amino acid dehydrogenase.